The primary structure comprises 929 residues: Urea transporter 2 (929 aa).

Basic and acidic residues predominate over residues 1 to 11 (MSDHPLKEMSD). The interval 1–89 (MSDHPLKEMS…KRRESELPRR (89 aa)) is disordered. Over residues 31 to 42 (SELSSPTWPSSS) the composition is skewed to low complexity. Basic and acidic residues predominate over residues 55–88 (PEEKDLRSSDEDSHIVKIEKPNERSKRRESELPR). A run of 9 helical transmembrane segments spans residues 133-155 (GAAQ…GLLI), 162-179 (IAGA…LALS), 184-204 (AIAS…VAVF), 212-232 (WWLL…SSAL), 241-261 (LPVF…ATGH), 310-330 (GGVI…HAAI), 349-371 (IYTG…MFYV), 378-399 (LLAL…NMMA), and 400-420 (VVGV…FLLL). The segment at 451–480 (SDEQKPPNGGGGEQSHGGGQRKAEEGSETV) is disordered. Over residues 458-470 (NGGGGEQSHGGGQ) the composition is skewed to gly residues. The residue at position 486 (S486) is a Phosphoserine. The next 4 helical transmembrane spans lie at 609-629 (GILI…SGCL), 647-667 (AIAA…MAVF), 675-695 (WWLL…SSAL), and 704-724 (LPVF…ATGH). The N-linked (GlcNAc...) asparagine glycan is linked to N742. 4 helical membrane-spanning segments follow: residues 773–793 (GGIF…HAAI), 812–832 (IYFG…GGMF), 841–861 (LLAI…ANML), and 863–883 (VFGL…FLLL).

This sequence belongs to the urea transporter family. As to quaternary structure, interacts with SNAPIN which enhances its urea transport activity. As to expression, expressed in the inner medulla of the kidney. In terms of tissue distribution, expressed in both the inner and outer renal medulla of the kidney.

It is found in the apical cell membrane. The protein resides in the cell membrane. The catalysed reaction is urea(in) = urea(out). Its activity is regulated as follows. Inhibited by phloretin. Activated by vasopressin, forskolin, 3-isobutyl-1-methylxanthine (IBMX) and cAMP. With respect to regulation, inhibited by phloretin. Inhibited by urea analogs and phloretin and activated by forskolin. Its activity is regulated as follows. Inhibited by phloretin and activated by forskolin. In terms of biological role, mediates the transport of urea driven by a concentration gradient across the cell membrane of the kidney inner medullary collecting duct which is critical to the urinary concentrating mechanism. This chain is Urea transporter 2 (Slc14a2), found in Rattus norvegicus (Rat).